The sequence spans 295 residues: Glutamyl-Q tRNA(Asp) synthetase (295 aa).

L-glutamate contacts are provided by residues 9–13 (RFAPT) and Glu45. The 'HIGH' region motif lies at 12–22 (PTPSGYLHFGS). Zn(2+)-binding residues include Cys101, Cys103, Tyr115, and Cys119. L-glutamate contacts are provided by Tyr172 and Arg190. Residues 228–232 (KLGKS) carry the 'KMSKS' region motif. Lys231 contributes to the ATP binding site.

This sequence belongs to the class-I aminoacyl-tRNA synthetase family. GluQ subfamily. Requires Zn(2+) as cofactor.

Catalyzes the tRNA-independent activation of glutamate in presence of ATP and the subsequent transfer of glutamate onto a tRNA(Asp). Glutamate is transferred on the 2-amino-5-(4,5-dihydroxy-2-cyclopenten-1-yl) moiety of the queuosine in the wobble position of the QUC anticodon. The chain is Glutamyl-Q tRNA(Asp) synthetase from Pseudomonas syringae pv. tomato (strain ATCC BAA-871 / DC3000).